We begin with the raw amino-acid sequence, 486 residues long: 3-sulfolactaldehyde dehydrogenase (486 aa).

NADP(+) contacts are provided by residues 157–158 (WN), 181–184 (RPAS), and 234–235 (GS). The active-site Proton acceptor is glutamate 256. Residue leucine 257 coordinates NADP(+). The active-site Nucleophile is the cysteine 290. NADP(+) is bound at residue glutamate 387.

This sequence belongs to the aldehyde dehydrogenase family.

It catalyses the reaction (2S)-3-sulfolactaldehyde + NADP(+) + H2O = (2S)-3-sulfolactate + NADPH + 2 H(+). The enzyme catalyses (2S)-3-sulfolactaldehyde + NAD(+) + H2O = (2S)-3-sulfolactate + NADH + 2 H(+). Catalyzes the oxidation of (2S)-3-sulfolactaldehyde to (2S)-3-sulfolactate, using both NAD(+) and NADP(+) as electron acceptors. Is involved in a degradation pathway of sulfoquinovose (SQ) that allows P.putida SQ1 to use SQ as the sole carbon and energy source for growth. The chain is 3-sulfolactaldehyde dehydrogenase from Pseudomonas putida (Arthrobacter siderocapsulatus).